Reading from the N-terminus, the 535-residue chain is CTP synthase (535 aa).

The interval methionine 1 to leucine 266 is amidoligase domain. Residue serine 12 coordinates CTP. Serine 12 provides a ligand contact to UTP. ATP is bound by residues glycine 13–isoleucine 18 and aspartate 70. Positions 70 and 140 each coordinate Mg(2+). Residues aspartate 147 to glutamate 149, lysine 187 to glutamine 192, and lysine 223 each bind CTP. Residues lysine 187–glutamine 192 and lysine 223 contribute to the UTP site. The Glutamine amidotransferase type-1 domain occupies arginine 291 to aspartate 535. Glycine 355 lines the L-glutamine pocket. Cysteine 382 serves as the catalytic Nucleophile; for glutamine hydrolysis. Residues leucine 383–glutamine 386, glutamate 406, and arginine 464 contribute to the L-glutamine site. Active-site residues include histidine 508 and glutamate 510.

The protein belongs to the CTP synthase family. As to quaternary structure, homotetramer.

The catalysed reaction is UTP + L-glutamine + ATP + H2O = CTP + L-glutamate + ADP + phosphate + 2 H(+). It catalyses the reaction L-glutamine + H2O = L-glutamate + NH4(+). The enzyme catalyses UTP + NH4(+) + ATP = CTP + ADP + phosphate + 2 H(+). It participates in pyrimidine metabolism; CTP biosynthesis via de novo pathway; CTP from UDP: step 2/2. Allosterically activated by GTP, when glutamine is the substrate; GTP has no effect on the reaction when ammonia is the substrate. The allosteric effector GTP functions by stabilizing the protein conformation that binds the tetrahedral intermediate(s) formed during glutamine hydrolysis. Inhibited by the product CTP, via allosteric rather than competitive inhibition. In terms of biological role, catalyzes the ATP-dependent amination of UTP to CTP with either L-glutamine or ammonia as the source of nitrogen. Regulates intracellular CTP levels through interactions with the four ribonucleotide triphosphates. This is CTP synthase from Methanopyrus kandleri (strain AV19 / DSM 6324 / JCM 9639 / NBRC 100938).